The chain runs to 382 residues: Inactive anthranilate O-methyltransferase 1 (382 aa).

S-adenosyl-L-homocysteine-binding residues include Tyr-20, Cys-61, Asn-66, Asp-102, Leu-103, Ser-146, and Tyr-147. Residues Glu-268 and Phe-270 each coordinate Mg(2+).

Belongs to the methyltransferase superfamily. Type-7 methyltransferase family. SABATH subfamily.

In Zea mays (Maize), this protein is Inactive anthranilate O-methyltransferase 1 (AAMT1I).